The sequence spans 805 residues: Sucrose synthase 1 (805 aa).

Positions 274–751 (MVFNVVILSP…GLQRIYEKYT (478 aa)) are GT-B glycosyltransferase.

Belongs to the glycosyltransferase 1 family. Plant sucrose synthase subfamily.

It carries out the reaction an NDP-alpha-D-glucose + D-fructose = a ribonucleoside 5'-diphosphate + sucrose + H(+). In terms of biological role, sucrose-cleaving enzyme that provides UDP-glucose and fructose for various metabolic pathways. The sequence is that of Sucrose synthase 1 from Tulipa gesneriana (Garden tulip).